Consider the following 75-residue polypeptide: Calhepatin (75 aa).

Ser-1 is modified (N-acetylserine). EF-hand domains follow at residues 2–37 (ADEQ…VHPK) and 38–73 (VSRN…LADL). Ca(2+)-binding residues include Asp-15, Asp-17, Ser-19, Thr-21, Glu-26, Asp-51, Asn-53, Asp-55, Gln-57, and Glu-62.

Monomer and homodimer. In terms of tissue distribution, liver, and to a much lower level intestine.

Functionally, binds both calcium and copper, but not zinc. May be involved in calcium signal transduction. This chain is Calhepatin, found in Lepidosiren paradoxus (South American lungfish).